The primary structure comprises 177 residues: Probable chemoreceptor glutamine deamidase CheD (177 aa).

It belongs to the CheD family.

The enzyme catalyses L-glutaminyl-[protein] + H2O = L-glutamyl-[protein] + NH4(+). Its function is as follows. Probably deamidates glutamine residues to glutamate on methyl-accepting chemotaxis receptors (MCPs), playing an important role in chemotaxis. The sequence is that of Probable chemoreceptor glutamine deamidase CheD from Pseudomonas savastanoi pv. phaseolicola (strain 1448A / Race 6) (Pseudomonas syringae pv. phaseolicola (strain 1448A / Race 6)).